A 233-amino-acid polypeptide reads, in one-letter code: Probable septum site-determining protein MinC (233 aa).

Residues 98–123 (LTEGKEKAPRPAPSEPTPPPPPVANQ) are disordered. Residues 107-120 (RPAPSEPTPPPPPV) are compositionally biased toward pro residues.

It belongs to the MinC family. As to quaternary structure, interacts with MinD and FtsZ.

In terms of biological role, cell division inhibitor that blocks the formation of polar Z ring septums. Rapidly oscillates between the poles of the cell to destabilize FtsZ filaments that have formed before they mature into polar Z rings. Prevents FtsZ polymerization. The sequence is that of Probable septum site-determining protein MinC from Klebsiella pneumoniae (strain 342).